Here is a 59-residue protein sequence, read N- to C-terminus: Ribosome modulation factor (59 aa).

The protein belongs to the ribosome modulation factor family.

It is found in the cytoplasm. In terms of biological role, during stationary phase, converts 70S ribosomes to an inactive dimeric form (100S ribosomes). The sequence is that of Ribosome modulation factor from Aeromonas veronii (strain B565).